The following is a 206-amino-acid chain: Large ribosomal subunit protein uL22m (206 aa).

The transit peptide at 1–40 (MAAALLRELGALWVPNLRIWTTQMLRVLPQSCIHTSTSLD) directs the protein to the mitochondrion.

Belongs to the universal ribosomal protein uL22 family. As to quaternary structure, component of the mitochondrial ribosome large subunit (39S) which comprises a 16S rRNA and about 50 distinct proteins.

It localises to the mitochondrion. This is Large ribosomal subunit protein uL22m (Mrpl22) from Rattus norvegicus (Rat).